The primary structure comprises 49 residues: uncharacterized protein (49 aa).

A helical transmembrane segment spans residues 23–43 (LYVISFVLFIVLFFGMFFKLI).

The protein resides in the host membrane. This is an uncharacterized protein from Spiroplasma melliferum (SpV1).